A 383-amino-acid polypeptide reads, in one-letter code: MQTWQLPEHIADVLPTNARQLESAREQLLALFRVHGYELVQPPLMEYAHSLLTHIDAGLSLKTILVTDRLSGRQLGIRADITPQVARIDAHLLSANQGINRLCYAGPVLHAQPDGLPNMREPLQAGAEMYGFADIRGDIELIDLMLKSMKIADMGKVLLSLGHIGIFRALSDAAHLDAGQSAALLALMQDKDTGSVEAQVKAWKLDGMWAKAFSLLPRLYGGREVLSDARGRLPDLSAVGGALDELQAVCDAFPDNEIHIDLSELRVDNYHTGLLYAAYAADFHDAVARGGRYDGLGGYFGRARPATGFSFDLRSFIGRLPAVERQPAVLVDAEDAEAAREAVEALREQGQCVVIDYGIGHNVSEELAGRLKKTDGVWQVVKR.

Belongs to the class-II aminoacyl-tRNA synthetase family. HisZ subfamily. Heteromultimer composed of HisG and HisZ subunits.

Its subcellular location is the cytoplasm. Its pathway is amino-acid biosynthesis; L-histidine biosynthesis; L-histidine from 5-phospho-alpha-D-ribose 1-diphosphate: step 1/9. Its function is as follows. Required for the first step of histidine biosynthesis. May allow the feedback regulation of ATP phosphoribosyltransferase activity by histidine. This chain is ATP phosphoribosyltransferase regulatory subunit, found in Neisseria gonorrhoeae (strain ATCC 700825 / FA 1090).